The primary structure comprises 257 residues: NAD-dependent protein deacetylase (257 aa).

A Deacetylase sirtuin-type domain is found at 3-252 (NGECLEGGRK…DLVLNEVKGI (250 aa)). NAD(+)-binding residues include alanine 29, threonine 33, phenylalanine 40, arginine 41, glutamine 105, isoleucine 107, aspartate 108, and histidine 123. Residue phenylalanine 40 coordinates nicotinamide. Nicotinamide-binding residues include isoleucine 107 and aspartate 108. Histidine 123 serves as the catalytic Proton acceptor. Positions 131, 134, 156, and 159 each coordinate Zn(2+). NAD(+) contacts are provided by serine 195, serine 196, and asparagine 220.

This sequence belongs to the sirtuin family. Class U subfamily. Zn(2+) is required as a cofactor.

Its subcellular location is the cytoplasm. The enzyme catalyses N(6)-acetyl-L-lysyl-[protein] + NAD(+) + H2O = 2''-O-acetyl-ADP-D-ribose + nicotinamide + L-lysyl-[protein]. Functionally, NAD-dependent protein deacetylase which modulates the activities of several enzymes which are inactive in their acetylated form. Deacetylates the N-terminal lysine residue of Alba, the major archaeal chromatin protein and that, in turn, increases Alba's DNA binding affinity, thereby repressing transcription. The sequence is that of NAD-dependent protein deacetylase from Caldivirga maquilingensis (strain ATCC 700844 / DSM 13496 / JCM 10307 / IC-167).